The chain runs to 95 residues: Large ribosomal subunit protein bL31 (95 aa).

Residues 68-95 (AGLNNINKKPEKKKIQGKSEPRKSLNEL) form a disordered region. A compositionally biased stretch (basic and acidic residues) spans 80-95 (KKIQGKSEPRKSLNEL).

The protein belongs to the bacterial ribosomal protein bL31 family. Type A subfamily. Part of the 50S ribosomal subunit.

Its function is as follows. Binds the 23S rRNA. This is Large ribosomal subunit protein bL31 from Ureaplasma parvum serovar 3 (strain ATCC 700970).